Here is a 129-residue protein sequence, read N- to C-terminus: MKNFHVVLEAAWLVRDVKTADDAIGVAISEAGKRLNPKLDFVEVDVGTTSCPVCGEPFSSVFIAANTALVGLIFEMKVFDAESAEHAERIAKSVIGKSLRDVPLTVVEVTEFERSVEKGEQQQKGKANK.

The protein belongs to the UPF0212 family.

This is UPF0212 protein MM_2357 from Methanosarcina mazei (strain ATCC BAA-159 / DSM 3647 / Goe1 / Go1 / JCM 11833 / OCM 88) (Methanosarcina frisia).